Here is a 68-residue protein sequence, read N- to C-terminus: Small ribosomal subunit protein bS21 (68 aa).

Residues 39–68 (PPSVKRVRKKQESERRHRKERAMRRRMMEE) form a disordered region. Over residues 54–68 (RHRKERAMRRRMMEE) the composition is skewed to basic residues.

This sequence belongs to the bacterial ribosomal protein bS21 family.

This Orientia tsutsugamushi (strain Boryong) (Rickettsia tsutsugamushi) protein is Small ribosomal subunit protein bS21.